A 499-amino-acid polypeptide reads, in one-letter code: Neuronal acetylcholine receptor subunit alpha-3 (499 aa).

An N-terminal signal peptide occupies residues 1 to 25 (MGVVLPPPPLSMLMLVLMLLPVASA). Topologically, residues 26–244 (SEAEHRLFQY…PLFYTINLII (219 aa)) are extracellular. Residues Asn49 and Asn166 are each glycosylated (N-linked (GlcNAc...) asparagine). Cystine bridges form between Cys153–Cys167 and Cys217–Cys218. A helical membrane pass occupies residues 245–260 (PCLLISFLTVLVFYLP). The Cytoplasmic portion of the chain corresponds to 261–262 (SD). Residues 263-279 (CGEKVTLCISVLLSLTV) form a helical membrane-spanning segment. Glu265 serves as a coordination point for Na(+). At 280–301 (FLLVITETIPSTSLVIPLIGEY) the chain is on the extracellular side. Residues 302-320 (LLFTMIFVTLSIVITVFVL) traverse the membrane as a helical segment. Residues 321–468 (NVHYRTPTTH…QDDWKYVAMV (148 aa)) lie on the Cytoplasmic side of the membrane. A phosphoserine mark is found at Ser407 and Ser410. Residues 469 to 487 (IDRIFLWVFILVCILGTAG) form a helical membrane-spanning segment. Topologically, residues 488 to 499 (LFLQPLMARDDT) are extracellular.

The protein belongs to the ligand-gated ion channel (TC 1.A.9) family. Acetylcholine receptor (TC 1.A.9.1) subfamily. Alpha-3/CHRNA3 sub-subfamily. As to quaternary structure, neuronal AChR is composed of two different types of subunits: alpha and beta. CHRNA3/Alpha-3 subunit can be combined to CHRNB2/beta-2 or CHRNB4/beta-4 to give rise to functional receptors. Part of a complex composed of STUB1/CHIP, VCP/p97, CHRNA3, and UBXN2A that modulates the ubiquitination and endoplasmic reticulum-associated degradation (ERAD) of CHRNA3. Within the complex UBXN2A acts as a scaffold protein required for the interaction of CHRNA3 with VCP/p97, this interaction also inhibits CHRNA3 ubiquitination by STUB1/CHIP and subsequently ERAD. Interacts with UBXN2A (via SEP domain), the interaction is required for the interaction of CHRNA3 in the STUB1:VCP:UBXN2A complex. Interacts with RIC3; which is required for proper folding and assembly. Interacts with LYPD6. In terms of processing, ubiquitinated; by STUB1/CHIP and thereafter degraded by the 26S proteosome complex. Expressed in the brain (at protein level).

It localises to the synaptic cell membrane. The protein resides in the cell membrane. It is found in the endoplasmic reticulum. Its subcellular location is the golgi apparatus. It catalyses the reaction K(+)(in) = K(+)(out). It carries out the reaction Na(+)(in) = Na(+)(out). The enzyme catalyses Ca(2+)(in) = Ca(2+)(out). Its activity is regulated as follows. Activated by a myriad of ligands such as acetylcholine, cytisine, nicotine, choline and epibatidine. The heteropentamer CHRNA3:CHRNB2 activity is blocked by alpha-conotoxins ImI, ImII, PnIA, GID and MII. The heteropentamer CHRNA3:CHRNB4 activity is blocked by the alpha-conotoxin ImI. In terms of biological role, component of neuronal acetylcholine receptors (nAChRs) that function as pentameric, ligand-gated cation channels with high calcium permeability among other activities. nAChRs are excitatory neurotrasnmitter receptors formed by a collection of nAChR subunits known to mediate synaptic transmission in the nervous system and the neuromuscular junction. Each nAchR subunit confers differential attributes to channel properties, including activation, deactivation and desensitization kinetics, pH sensitivity, cation permeability, and binding to allosteric modulators. CHRNA3 forms heteropentameric neuronal acetylcholine receptors with CHRNA5, CHRNB2 and CHRNB4. CHRNA3:CHRNB4 being predominant in neurons of the autonomic ganglia, it is known as ganglionic nicotinic receptor. CHRNA3:CHRNB4 or CHRNA3:CHRNA5:CHRNB4 play also an important role in the habenulo-interpeduncular tract, modulating the mesolimbic dopamine system and affecting reward circuits and addiction. Hypothalamic CHRNA3:CHRNB4 nAChR activation by nicotine leads to activation of POMC neurons and a decrease in food intake. Also expressed in the urothelium where it modulates reflex bladder activity by increasing intracellular calcium through extracellular influx and basal ATP release. This chain is Neuronal acetylcholine receptor subunit alpha-3 (Chrna3), found in Mus musculus (Mouse).